The following is a 340-amino-acid chain: Anthranilate phosphoribosyltransferase (340 aa).

Residues glycine 81, 84–85, threonine 89, 91–94, 109–117, and serine 121 each bind 5-phospho-alpha-D-ribose 1-diphosphate; these read GD, NIST, and KHGNRGATS. Residue glycine 81 coordinates anthranilate. Serine 93 provides a ligand contact to Mg(2+). Asparagine 112 is an anthranilate binding site. Anthranilate is bound at residue arginine 167. Mg(2+)-binding residues include aspartate 225 and glutamate 226.

Belongs to the anthranilate phosphoribosyltransferase family. In terms of assembly, homodimer. The cofactor is Mg(2+).

It catalyses the reaction N-(5-phospho-beta-D-ribosyl)anthranilate + diphosphate = 5-phospho-alpha-D-ribose 1-diphosphate + anthranilate. Its pathway is amino-acid biosynthesis; L-tryptophan biosynthesis; L-tryptophan from chorismate: step 2/5. In terms of biological role, catalyzes the transfer of the phosphoribosyl group of 5-phosphorylribose-1-pyrophosphate (PRPP) to anthranilate to yield N-(5'-phosphoribosyl)-anthranilate (PRA). The sequence is that of Anthranilate phosphoribosyltransferase from Methanocorpusculum labreanum (strain ATCC 43576 / DSM 4855 / Z).